The chain runs to 327 residues: Annexin A8 (327 aa).

4 Annexin repeats span residues 21 to 92 (FNPD…ALMY), 93 to 164 (PPYS…CLLQ), 177 to 249 (GLVL…TVVK), and 253 to 324 (NVHS…NLVG). The Ca(2+) site is built by Met-266, Gly-268, Gly-270, and Asp-310.

This sequence belongs to the annexin family.

This protein is an anticoagulant protein that acts as an indirect inhibitor of the thromboplastin-specific complex, which is involved in the blood coagulation cascade. The polypeptide is Annexin A8 (Anxa8) (Mus musculus (Mouse)).